An 898-amino-acid polypeptide reads, in one-letter code: Alanine--tRNA ligase (898 aa).

4 residues coordinate Zn(2+): His584, His588, Cys686, and His690.

It belongs to the class-II aminoacyl-tRNA synthetase family. It depends on Zn(2+) as a cofactor.

Its subcellular location is the cytoplasm. The enzyme catalyses tRNA(Ala) + L-alanine + ATP = L-alanyl-tRNA(Ala) + AMP + diphosphate. Its function is as follows. Catalyzes the attachment of alanine to tRNA(Ala) in a two-step reaction: alanine is first activated by ATP to form Ala-AMP and then transferred to the acceptor end of tRNA(Ala). Also edits incorrectly charged Ser-tRNA(Ala) and Gly-tRNA(Ala) via its editing domain. The sequence is that of Alanine--tRNA ligase from Myxococcus xanthus (strain DK1622).